The following is a 74-amino-acid chain: Putative membrane protein insertion efficiency factor (74 aa).

The protein belongs to the UPF0161 family.

The protein resides in the cell membrane. Its function is as follows. Could be involved in insertion of integral membrane proteins into the membrane. In Anoxybacillus flavithermus (strain DSM 21510 / WK1), this protein is Putative membrane protein insertion efficiency factor.